Reading from the N-terminus, the 362-residue chain is MTELLKTPIHPLYAKYGAKTIDFGGWDLPVQFAGIKAEHEAVRTDAGLFDVSHMGEILVKGPDSTSYLQYLLTNDIEKIKIGKAQYNIMCYETGGTVDDLVVYKKSETEYILVVNAANTDKDFEWMVKNIRGDVSVTNVSSEYGQLALQGPNAEKILAKLTDVDLSSISFFGFVEDADVAGVKTIISRSGYTGEDGFEIYMPSADAGKVFEAILAEGVAPIGLGARDTLRLEAVLALYGQELSKDITPLEAGLNFAVKLKKEADFIGKEALIKQKEVGLNRKLVGIELIERGIPRHDYPVFLNEEEIGIVTSGTQSPTLGTNIGLALIDTAYTEIGQEVEVGIRNKKVKAKIVPTPFYKRAK.

It belongs to the GcvT family. The glycine cleavage system is composed of four proteins: P, T, L and H.

The catalysed reaction is N(6)-[(R)-S(8)-aminomethyldihydrolipoyl]-L-lysyl-[protein] + (6S)-5,6,7,8-tetrahydrofolate = N(6)-[(R)-dihydrolipoyl]-L-lysyl-[protein] + (6R)-5,10-methylene-5,6,7,8-tetrahydrofolate + NH4(+). Its function is as follows. The glycine cleavage system catalyzes the degradation of glycine. This is Aminomethyltransferase from Listeria monocytogenes serotype 4b (strain CLIP80459).